Here is a 525-residue protein sequence, read N- to C-terminus: MNTANFPWLTTIILLPIAASLLIPIIPDKDGKTIRWYALIVGLIDFALIVYAFYTSYDFANPDLQLVESYPWVPQLDLNWSVGADGLSMPLIILTGFITTLATLAAWPVTLKPRLFYFLLLAMYGGQIAVFAVQDLLLFFLVWELELIPVYLLLAIWGGKKRQYAATKFILYTAGGSLFILLAALTMAFYGDNVTFDMRSLALKDYALNFQLLLYAGFLIAYAIKLPIIPLHTWLPDAHGEATAPAHMLLAGILLKMGGYALIRMNAGILPDAHAYFAPVLVVLGVVNIIYAALTSFAQRNLKRKIAYSSISHMGFVIIGFASFTDLGLSGAVLQMVSHGLIGASLFFLVGATYDRTHTLMLDEMGGVGKRMPKIFAMFTACSMASLALPGMSGFVAELMVFVGFATSDAYSSTFKVIVVFLMAVGVILTPIYLLSMLREIFYGKENEELVSHQQLIDAEPREVFVIACLLVPIIGIGFYPKLLTQMYDATTVQLTARLRDSVPTLAQEKPEAPKVSLSAPVIGN.

The next 14 membrane-spanning stretches (helical) occupy residues 6–26 (FPWL…IPII), 36–56 (WYAL…FYTS), 91–111 (LIIL…PVTL), 115–135 (LFYF…AVQD), 136–156 (LLLF…LLAI), 169–189 (FILY…TMAF), 212–232 (LLLY…IPLH), 243–263 (TAPA…YALI), 277–297 (FAPV…LTSF), 314–334 (MGFV…GAVL), 335–355 (QMVS…ATYD), 375–397 (IFAM…GFVA), 417–437 (VIVV…LLSM), and 464–484 (VFVI…PKLL).

Belongs to the complex I subunit 4 family.

It localises to the cellular thylakoid membrane. The catalysed reaction is a plastoquinone + NADH + (n+1) H(+)(in) = a plastoquinol + NAD(+) + n H(+)(out). The enzyme catalyses a plastoquinone + NADPH + (n+1) H(+)(in) = a plastoquinol + NADP(+) + n H(+)(out). Its function is as follows. NDH-1 shuttles electrons from NAD(P)H, via FMN and iron-sulfur (Fe-S) centers, to quinones in the respiratory chain. The immediate electron acceptor for the enzyme in this species is believed to be plastoquinone. Couples the redox reaction to proton translocation (for every two electrons transferred, four hydrogen ions are translocated across the cytoplasmic membrane), and thus conserves the redox energy in a proton gradient. This chain is NAD(P)H-quinone oxidoreductase chain 4 1, found in Trichormus variabilis (strain ATCC 29413 / PCC 7937) (Anabaena variabilis).